The sequence spans 297 residues: Urease accessory protein UreD 2 (297 aa).

Belongs to the UreD family. UreD, UreF and UreG form a complex that acts as a GTP-hydrolysis-dependent molecular chaperone, activating the urease apoprotein by helping to assemble the nickel containing metallocenter of UreC. The UreE protein probably delivers the nickel.

The protein localises to the cytoplasm. Its function is as follows. Required for maturation of urease via the functional incorporation of the urease nickel metallocenter. This chain is Urease accessory protein UreD 2, found in Methylorubrum populi (strain ATCC BAA-705 / NCIMB 13946 / BJ001) (Methylobacterium populi).